Reading from the N-terminus, the 173-residue chain is Alpha-crystallin A chain (173 aa).

Met-1 is modified (N-acetylmethionine). Positions 1 to 63 (MDVTIQHPWF…RTVLDSGISE (63 aa)) are required for complex formation with BFSP1 and BFSP2. A Deamidated glutamine; partial modification is found at Gln-6. Residue Ser-45 is modified to Phosphoserine. Gln-50 is modified (deamidated glutamine; partial). In terms of domain architecture, sHSP spans 52–162 (LFRTVLDSGI…GHSERAIPVS (111 aa)). N6-acetyllysine is present on Lys-99. Residue His-100 participates in Zn(2+) binding. Asn-101 carries the post-translational modification Deamidated asparagine; partial. Residues Glu-102 and His-107 each coordinate Zn(2+). Ser-122 is modified (phosphoserine). Asn-123 carries the post-translational modification Deamidated asparagine; partial. A disulfide bridge connects residues Cys-131 and Cys-142. The tract at residues 146-173 (VQSSMDDGHSERAIPVSREEKPSSVPSS) is disordered. Residue Gln-147 is modified to Deamidated glutamine; partial. Residues 151-167 (DDGHSERAIPVSREEKP) show a composition bias toward basic and acidic residues. His-154 is a binding site for Zn(2+). O-linked (GlcNAc) serine glycosylation is present at Ser-162.

It belongs to the small heat shock protein (HSP20) family. Heteromer composed of three CRYAA and one CRYAB subunits. Inter-subunit bridging via zinc ions enhances stability, which is crucial as there is no protein turn over in the lens. Can also form homodimers and homotetramers (dimers of dimers) which serve as the building blocks of homooligomers. Within homooligomers, the zinc-binding motif is created from residues of 3 different molecules. His-100 and Glu-102 from one molecule are ligands of the zinc ion, and His-107 and His-154 residues from additional molecules complete the site with tetrahedral coordination geometry. Part of a complex required for lens intermediate filament formation composed of BFSP1, BFSP2 and CRYAA. Post-translationally, undergoes age-dependent proteolytical cleavage at the C-terminus.

Its subcellular location is the cytoplasm. The protein resides in the nucleus. Its function is as follows. Contributes to the transparency and refractive index of the lens. In its oxidized form (absence of intramolecular disulfide bond), acts as a chaperone, preventing aggregation of various proteins under a wide range of stress conditions. Required for the correct formation of lens intermediate filaments as part of a complex composed of BFSP1, BFSP2 and CRYAA. This Orycteropus afer (Aardvark) protein is Alpha-crystallin A chain (CRYAA).